A 242-amino-acid polypeptide reads, in one-letter code: UPF0309 protein BAbS19_II03080 (242 aa).

Residues Ala30 to Pro214 enclose the SIS domain.

It belongs to the UPF0309 family.

The sequence is that of UPF0309 protein BAbS19_II03080 from Brucella abortus (strain S19).